The chain runs to 255 residues: Short chain dehydrogenase adrF (255 aa).

NADP(+) contacts are provided by Ile11, Arg118, Tyr150, Lys154, and Val183. Tyr150 functions as the Proton acceptor in the catalytic mechanism. The active-site Lowers pKa of active site Tyr is Lys154.

This sequence belongs to the short-chain dehydrogenases/reductases (SDR) family.

The protein operates within secondary metabolite biosynthesis; terpenoid biosynthesis. Functionally, short chain dehydrogenase; part of the gene cluster that mediates the biosynthesis of andrastins, meroterpenoid compounds that exhibit inhibitory activity against ras farnesyltransferase, suggesting that they could be promising leads for antitumor agents. The first step of the pathway is the synthesis of 3,5-dimethylorsellinic acid (DMOA) by the polyketide synthase adrD via condensation of one acetyl-CoA starter unit with 3 malonyl-CoA units and 2 methylations. DMAO is then converted to farnesyl-DMAO by the prenyltransferase adrG. The methyltransferase adrK catalyzes the methylation of the carboxyl group of farnesyl-DMAO to farnesyl-DMAO methyl ester which is further converted to epoxyfarnesyl-DMAO methyl ester by the FAD-dependent monooxygenase adrH. The terpene cyclase adrI then catalyzes the carbon skeletal rearrangement to generate the andrastin E, the first compound in the pathway having the andrastin scaffold, with the tetracyclic ring system. The post-cyclization tailoring enzymes adrF, adrE, adrJ, and adrA, are involved in the conversion of andrastin E into andrastin A. The short chain dehydrogenase adrF is responsible for the oxidation of the C-3 a hydroxyl group of andrastin E to yield the corresponding ketone, andrastin D. The ketoreductase adrE stereoselectively reduces the carbonyl moiety to reverse the stereochemistry of the C-3 position to yield andrastin F. The acetyltransferase adrJ is the acetyltransferase that attaches the acetyl group to the C-3 hydroxyl group of andrastin F to yield andrastin C. Finally, the cytochrome P450 monooxygenase adrA catalyzes two sequential oxidation reactions of the C-23 methyl group, to generate the corresponding alcohol andrastin B, and aldehyde andrastin A. In Penicillium rubens (strain ATCC 28089 / DSM 1075 / NRRL 1951 / Wisconsin 54-1255) (Penicillium chrysogenum), this protein is Short chain dehydrogenase adrF.